The chain runs to 173 residues: Regulator of ribonuclease activity A (173 aa).

The protein belongs to the RraA family. In terms of assembly, homotrimer. Binds to both RNA-binding sites in the C-terminal region of Rne and to RhlB.

It is found in the cytoplasm. In terms of biological role, globally modulates RNA abundance by binding to RNase E (Rne) and regulating its endonucleolytic activity. Can modulate Rne action in a substrate-dependent manner by altering the composition of the degradosome. Modulates RNA-binding and helicase activities of the degradosome. The polypeptide is Regulator of ribonuclease activity A (Vibrio vulnificus (strain CMCP6)).